The chain runs to 211 residues: Protein-methionine-sulfoxide reductase heme-binding subunit MsrQ (211 aa).

4 helical membrane passes run 17-37, 82-102, 116-136, and 153-173; these read LAGLLPFLWLVWAINHGGLGA, LWCFAWATLHLTSYALLELGV, PYLTLGIISWVILLALAFTST, and FVYLVAILAPIHYLWSVKIIS.

Belongs to the MsrQ family. As to quaternary structure, heterodimer of a catalytic subunit (MsrP) and a heme-binding subunit (MsrQ). The cofactor is FMN. Heme b is required as a cofactor.

It is found in the cell inner membrane. In terms of biological role, part of the MsrPQ system that repairs oxidized periplasmic proteins containing methionine sulfoxide residues (Met-O), using respiratory chain electrons. Thus protects these proteins from oxidative-stress damage caused by reactive species of oxygen and chlorine generated by the host defense mechanisms. MsrPQ is essential for the maintenance of envelope integrity under bleach stress, rescuing a wide series of structurally unrelated periplasmic proteins from methionine oxidation, including the primary periplasmic chaperone SurA and the lipoprotein Pal. MsrQ provides electrons for reduction to the reductase catalytic subunit MsrP, using the quinone pool of the respiratory chain. In Shigella sonnei (strain Ss046), this protein is Protein-methionine-sulfoxide reductase heme-binding subunit MsrQ.